The primary structure comprises 281 residues: MSLSALETTLNTAFDARDSITAATKGEVRDAVELALDLLDKGEARVAEPQADGAWKINQWLKKAVLISFRLNDMAPIPGGPGGAQWWDKVPSKLENYSEQKFREAGFRAVPGAIVRRSAFIAKNVVLMPSFVNLGAYVDEATMIDTWSTVGSCAQIGKHVHISGGVGIGGVLEPLQAGPVIIEDNCFIGARSEVAEGVIVRKGAVLSMGVFIGASTRIIDRATGEVYIGEVPAYSVVVPGSMPGKPLPDGSPGPSLYCAVIVKRVDEKTRSKTSINELLRE.

This sequence belongs to the transferase hexapeptide repeat family.

It is found in the cytoplasm. It catalyses the reaction (S)-2,3,4,5-tetrahydrodipicolinate + succinyl-CoA + H2O = (S)-2-succinylamino-6-oxoheptanedioate + CoA. It participates in amino-acid biosynthesis; L-lysine biosynthesis via DAP pathway; LL-2,6-diaminopimelate from (S)-tetrahydrodipicolinate (succinylase route): step 1/3. The chain is 2,3,4,5-tetrahydropyridine-2,6-dicarboxylate N-succinyltransferase from Afipia carboxidovorans (strain ATCC 49405 / DSM 1227 / KCTC 32145 / OM5) (Oligotropha carboxidovorans).